We begin with the raw amino-acid sequence, 403 residues long: Phosphopentomutase (403 aa).

D13, D298, H303, D339, H340, and H351 together coordinate Mn(2+).

The protein belongs to the phosphopentomutase family. It depends on Mn(2+) as a cofactor.

The protein localises to the cytoplasm. It carries out the reaction 2-deoxy-alpha-D-ribose 1-phosphate = 2-deoxy-D-ribose 5-phosphate. The catalysed reaction is alpha-D-ribose 1-phosphate = D-ribose 5-phosphate. The protein operates within carbohydrate degradation; 2-deoxy-D-ribose 1-phosphate degradation; D-glyceraldehyde 3-phosphate and acetaldehyde from 2-deoxy-alpha-D-ribose 1-phosphate: step 1/2. Isomerase that catalyzes the conversion of deoxy-ribose 1-phosphate (dRib-1-P) and ribose 1-phosphate (Rib-1-P) to deoxy-ribose 5-phosphate (dRib-5-P) and ribose 5-phosphate (Rib-5-P), respectively. The polypeptide is Phosphopentomutase (Streptococcus pneumoniae (strain JJA)).